We begin with the raw amino-acid sequence, 125 residues long: Large ribosomal subunit protein bL21 (125 aa).

Residues 75–89 (FKKRRRQNSKRKRGH) are compositionally biased toward basic residues. Disordered regions lie at residues 75 to 94 (FKKRRRQNSKRKRGHRQDLT) and 103 to 125 (AGGASPAAAAASSETPAASAPEA). Over residues 106–125 (ASPAAAAASSETPAASAPEA) the composition is skewed to low complexity.

The protein belongs to the bacterial ribosomal protein bL21 family. Part of the 50S ribosomal subunit. Contacts protein L20.

Its function is as follows. This protein binds to 23S rRNA in the presence of protein L20. The polypeptide is Large ribosomal subunit protein bL21 (Methylocella silvestris (strain DSM 15510 / CIP 108128 / LMG 27833 / NCIMB 13906 / BL2)).